Here is a 281-residue protein sequence, read N- to C-terminus: sn-glycerol-3-phosphate transport system permease protein UgpE (281 aa).

Helical transmembrane passes span 16–36 (LILGIAVILFPLYVAFVAATL), 85–105 (FSITLGKITVSMLSAFAIVWF), 113–133 (FFWMIFITLMLPVEVRIFPTV), 142–162 (LDSYAGLTLPLMASATATFLF), 202–222 (ALFVITFIYGWNQYLWPLLII), and 247–267 (WNSVMVAMLLTLIPPVVIVLV). The ABC transmembrane type-1 domain maps to 77 to 268 (LLNSFVMAFS…IPPVVIVLVM (192 aa)).

It belongs to the binding-protein-dependent transport system permease family. UgpAE subfamily. In terms of assembly, the complex is composed of two ATP-binding proteins (UgpC), two transmembrane proteins (UgpA and UgpE) and a solute-binding protein (UgpB).

It is found in the cell inner membrane. Its function is as follows. Part of the ABC transporter complex UgpBAEC involved in sn-glycerol-3-phosphate (G3P) import. Probably responsible for the translocation of the substrate across the membrane. Can also transport glycerophosphoryl diesters, which are hydrolyzed to G3P and alcohol during transport. The G3P moiety can be detected in the cytoplasm whereas the corresponding alcohol is usually found in the culture medium. It was proposed by Yang et al that the complex could also transport glycerol-2-phosphate (G2P) in vivo, but it was shown later by Wuttge et al that UgpB does not bind G2P, questioning this transport activity. G2P might be converted in the periplasm to G3P before its transport. The sequence is that of sn-glycerol-3-phosphate transport system permease protein UgpE from Escherichia coli (strain K12).